Here is a 982-residue protein sequence, read N- to C-terminus: Serine/threonine-protein kinase PknD (982 aa).

The Protein kinase domain maps to tyrosine 51–leucine 342. Residues isoleucine 57 to valine 65 and lysine 80 contribute to the ATP site. The active-site Proton acceptor is the aspartate 186.

It belongs to the protein kinase superfamily. Ser/Thr protein kinase family. Autophosphorylated on serine and threonine residues.

It catalyses the reaction L-seryl-[protein] + ATP = O-phospho-L-seryl-[protein] + ADP + H(+). The catalysed reaction is L-threonyl-[protein] + ATP = O-phospho-L-threonyl-[protein] + ADP + H(+). Its function is as follows. Together with the serine/threonine kinase Pkn1, may play a role in the specific interactions with host proteins during intracellular growth. The chain is Serine/threonine-protein kinase PknD from Protochlamydia amoebophila (strain UWE25).